Reading from the N-terminus, the 1042-residue chain is Putative type I restriction enzyme MjaIXP endonuclease subunit (1042 aa).

The region spanning 323–487 (GETPEDRRIG…FLVFGDYISA (165 aa)) is the Helicase ATP-binding domain. Residues 439–442 (DEAH) carry the DEAH box motif. The region spanning 551–731 (LTEDYLSKVS…DIKVVIEEMK (181 aa)) is the Helicase C-terminal domain.

The protein belongs to the HsdR family. As to quaternary structure, the type I restriction/modification system is composed of three polypeptides R, M and S.

The enzyme catalyses Endonucleolytic cleavage of DNA to give random double-stranded fragments with terminal 5'-phosphates, ATP is simultaneously hydrolyzed.. In terms of biological role, the restriction (R) subunit of a type I restriction enzyme that recognizes 5'-CCAN(5)GTR-3' and cleaves a random distance away. The R subunit is required for both nuclease and ATPase activities, but not for modification. After locating a non-methylated recognition site, the enzyme complex serves as a molecular motor that translocates DNA in an ATP-dependent manner until a collision occurs that triggers cleavage. The polypeptide is Putative type I restriction enzyme MjaIXP endonuclease subunit (Methanocaldococcus jannaschii (strain ATCC 43067 / DSM 2661 / JAL-1 / JCM 10045 / NBRC 100440) (Methanococcus jannaschii)).